Consider the following 376-residue polypeptide: Putative transcription factor egl-18 (376 aa).

4 disordered regions span residues Met-1 to Cys-33, Asn-65 to Phe-122, Met-148 to Pro-197, and Ala-240 to Ala-264. Basic and acidic residues predominate over residues Thr-9–Asp-27. Low complexity-rich tracts occupy residues Leu-68–Pro-89 and Gln-165–Ser-175. Residues Val-176–Asp-195 show a composition bias toward basic and acidic residues. A compositionally biased stretch (polar residues) spans Thr-241–Ser-250. The segment at Cys-266–Cys-290 adopts a GATA-type zinc-finger fold.

As to expression, expressed in differentiated seam cells. Expressed in the head and trunk.

It is found in the nucleus. Its function is as follows. Probable transcription factor. Involved in embryonic development and in vulval development in larvae, acting redundantly, at least in part, with elt-6. Perhaps acting together with elt-6, may form a positive feedback loop to initiate and maintain lin-39 gene expression to ensure proper vulval precursor cell (VPC) fate specification. Together with elt-6, acts as a downstream target of the Wnt/beta-catenin asymmetry pathway, required to adopt or maintain the seam cell fate. Required in seam cells, acting redundantly with elt-6, to promote production of alae, expression of several seam-specific genes and maintenance of seam cells in an unfused state. Plays a role in longevity. May form a transcriptional circuit with GATA factors elt-3 and elt-6. This Caenorhabditis elegans protein is Putative transcription factor egl-18.